The primary structure comprises 590 residues: Acetolactate synthase large subunit (590 aa).

A thiamine diphosphate-binding site is contributed by Glu61. FAD-binding positions include Arg163, 271-292 (HGTAYANFAVSECDLLIALGAR), and 314-333 (DIDPAEVGKNRIPQVAIVGD). The tract at residues 405-484 (QHQMWSAQFL…IKIVIINNRW (80 aa)) is thiamine pyrophosphate binding. Mg(2+)-binding residues include Asp455 and Asn482.

The protein belongs to the TPP enzyme family. As to quaternary structure, dimer of large and small chains. Mg(2+) serves as cofactor. Requires thiamine diphosphate as cofactor.

It localises to the plastid. It is found in the chloroplast. It catalyses the reaction 2 pyruvate + H(+) = (2S)-2-acetolactate + CO2. It functions in the pathway amino-acid biosynthesis; L-isoleucine biosynthesis; L-isoleucine from 2-oxobutanoate: step 1/4. Its pathway is amino-acid biosynthesis; L-valine biosynthesis; L-valine from pyruvate: step 1/4. This chain is Acetolactate synthase large subunit (ilvB), found in Porphyra purpurea (Red seaweed).